We begin with the raw amino-acid sequence, 538 residues long: Coiled-coil domain-containing protein 8 (538 aa).

The tract at residues 58 to 128 (IMEKSTPHPP…QGPRRGKKVR (71 aa)) is disordered. The span at 119 to 128 (QGPRRGKKVR) shows a compositional bias: basic residues. Phosphoserine is present on residues Ser-142, Ser-146, and Ser-261. Residues 213–473 (WAPRAGPGVG…GTAPGARARK (261 aa)) form a disordered region. A compositionally biased stretch (basic and acidic residues) spans 301–313 (DSQREEAIADQRE). A compositionally biased stretch (low complexity) spans 321–332 (AGAPADQGAEAA). Residues 349–366 (AEEGAEAADNQREEAADN) adopt a coiled-coil conformation. Composition is skewed to basic and acidic residues over residues 357–373 (DNQR…EAPA), 381–392 (DNHREEAADNQR), and 405–419 (DNQR…RERA). 2 stretches are compositionally biased toward low complexity: residues 428–438 (QRAQARAGQRA) and 458–469 (AAQGTTGTAPGA). Positions 500–506 (PRLPTLP) match the PxLPxI/L motif; mediates interaction with ANKRA2 motif. Residues 514–535 (EARNLRVLRAEARAEAEQGEQE) are a coiled coil.

As to quaternary structure, component of the 3M complex, composed of core components CUL7, CCDC8 and OBSL1. Interacts (via PxLPxI/L motif) with ANKRA2 (via ankyrin repeats); may link the 3M complex to histone deacetylases including HDAC4 and HDAC5. In terms of tissue distribution, widely expressed with low levels in spleen, skeletal muscle, small intestine, kidney and liver.

Its subcellular location is the cytoplasm. It localises to the cytoskeleton. The protein localises to the microtubule organizing center. The protein resides in the centrosome. Its function is as follows. Core component of the 3M complex, a complex required to regulate microtubule dynamics and genome integrity. It is unclear how the 3M complex regulates microtubules, it could act by controlling the level of a microtubule stabilizer. Required for localization of CUL7 to the centrosome. In Homo sapiens (Human), this protein is Coiled-coil domain-containing protein 8 (CCDC8).